The following is a 200-amino-acid chain: dTTP/UTP pyrophosphatase (200 aa).

Residue Asp81 is the Proton acceptor of the active site.

This sequence belongs to the Maf family. YhdE subfamily. Requires a divalent metal cation as cofactor.

Its subcellular location is the cytoplasm. It carries out the reaction dTTP + H2O = dTMP + diphosphate + H(+). The enzyme catalyses UTP + H2O = UMP + diphosphate + H(+). Functionally, nucleoside triphosphate pyrophosphatase that hydrolyzes dTTP and UTP. May have a dual role in cell division arrest and in preventing the incorporation of modified nucleotides into cellular nucleic acids. This Cupriavidus metallidurans (strain ATCC 43123 / DSM 2839 / NBRC 102507 / CH34) (Ralstonia metallidurans) protein is dTTP/UTP pyrophosphatase.